The chain runs to 271 residues: GTP cyclohydrolase FolE2 (271 aa).

This sequence belongs to the GTP cyclohydrolase IV family.

The enzyme catalyses GTP + H2O = 7,8-dihydroneopterin 3'-triphosphate + formate + H(+). Its pathway is cofactor biosynthesis; 7,8-dihydroneopterin triphosphate biosynthesis; 7,8-dihydroneopterin triphosphate from GTP: step 1/1. Converts GTP to 7,8-dihydroneopterin triphosphate. The sequence is that of GTP cyclohydrolase FolE2 from Geotalea uraniireducens (strain Rf4) (Geobacter uraniireducens).